The following is a 544-amino-acid chain: Chaperonin GroEL (544 aa).

ATP contacts are provided by residues 30 to 33, Lys51, 87 to 91, Gly415, 481 to 483, and Asp497; these read TLGP, DGTTT, and DAL.

The protein belongs to the chaperonin (HSP60) family. Forms a cylinder of 14 subunits composed of two heptameric rings stacked back-to-back. Interacts with the co-chaperonin GroES.

It is found in the cytoplasm. It catalyses the reaction ATP + H2O + a folded polypeptide = ADP + phosphate + an unfolded polypeptide.. Functionally, together with its co-chaperonin GroES, plays an essential role in assisting protein folding. The GroEL-GroES system forms a nano-cage that allows encapsulation of the non-native substrate proteins and provides a physical environment optimized to promote and accelerate protein folding. This chain is Chaperonin GroEL, found in Chlamydia muridarum (strain MoPn / Nigg).